A 267-amino-acid chain; its full sequence is Glutamate 5-kinase (267 aa).

Position 18 (Lys18) interacts with ATP. Positions 58, 145, and 157 each coordinate substrate. Residues 177 to 178 (SD) and 219 to 225 (TGGMATK) contribute to the ATP site.

Belongs to the glutamate 5-kinase family.

Its subcellular location is the cytoplasm. It carries out the reaction L-glutamate + ATP = L-glutamyl 5-phosphate + ADP. It functions in the pathway amino-acid biosynthesis; L-proline biosynthesis; L-glutamate 5-semialdehyde from L-glutamate: step 1/2. Functionally, catalyzes the transfer of a phosphate group to glutamate to form L-glutamate 5-phosphate. The polypeptide is Glutamate 5-kinase (Clostridium tetani (strain Massachusetts / E88)).